We begin with the raw amino-acid sequence, 763 residues long: Cyclin-F (763 aa).

A Nuclear localization signal 1 motif is present at residues 19-27 (KRRVKRRPR). Positions 28–75 (VLTLLSLPEDVLLYVLECLPAVDILSMREVHPHLRSLVDSHSSVWARA) constitute an F-box domain. Residues 299 to 411 (INKTSIFTTQ…EIISALEGKI (113 aa)) enclose the Cyclin N-terminal domain. 2 consecutive short sequence motifs (d box) follow at residues 316-319 (RYIL) and 355-358 (RAKL). 2 disordered regions span residues 574-600 (GSKT…TAEL) and 677-763 (KLEN…SDEL). The Nuclear localization signal 2 signature appears at 575–581 (SKTKRRR). Positions 580-590 (RREDSIQEDRG) are enriched in basic and acidic residues. The PEST stretch occupies residues 589–747 (RGSFVTTPTA…LFKASRRQVK (159 aa)). A compositionally biased stretch (low complexity) spans 692 to 710 (SSGYSSVSSGGSPTSSSSP). Positions 741–751 (ASRRQVKRKNQ) are enriched in basic residues.

This sequence belongs to the cyclin family. Cyclin AB subfamily. Component of the SCF(CCNF) complex.

It localises to the nucleus. The protein localises to the cytoplasm. The protein resides in the perinuclear region. It is found in the cytoskeleton. Its subcellular location is the microtubule organizing center. It localises to the centrosome. The protein localises to the centriole. Functionally, substrate recognition component of the SCF(CCNF) E3 ubiquitin-protein ligase complex which mediates the ubiquitination and subsequent proteasomal degradation of target proteins. The SCF(CCNF) E3 ubiquitin-protein ligase complex is an integral component of the ubiquitin proteasome system (UPS) and links proteasome degradation to the cell cycle. Mediates the substrate recognition and the proteasomal degradation of various target proteins during G2 phase involved in the regulation of cell cycle progression and in the maintenance of genome stability. The protein is Cyclin-F (ccnf) of Xenopus tropicalis (Western clawed frog).